Reading from the N-terminus, the 67-residue chain is Small ribosomal subunit protein eS17 (67 aa).

It belongs to the eukaryotic ribosomal protein eS17 family.

The polypeptide is Small ribosomal subunit protein eS17 (Thermococcus sibiricus (strain DSM 12597 / MM 739)).